The sequence spans 74 residues: ATP synthase F(1) complex subunit epsilon, mitochondrial (74 aa).

It belongs to the eukaryotic ATPase epsilon family. In terms of assembly, component of the ATP synthase complex composed at least of ATP5F1A/subunit alpha, ATP5F1B/subunit beta, ATP5MC1/subunit c (homooctomer), MT-ATP6/subunit a, MT-ATP8/subunit 8, ATP5ME/subunit e, ATP5MF/subunit f, ATP5MG/subunit g, ATP5MK/subunit k, ATP5MJ/subunit j, ATP5F1C/subunit gamma, ATP5F1D/subunit delta, ATP5F1E/subunit epsilon, ATP5PF/subunit F6, ATP5PB/subunit b, ATP5PD/subunit d, ATP5PO/subunit OSCP. ATP synthase complex consists of a soluble F(1) head domain (subunits alpha(3) and beta(3)) - the catalytic core - and a membrane F(0) domain - the membrane proton channel (subunits c, a, 8, e, f, g, k and j). These two domains are linked by a central stalk (subunits gamma, delta, and epsilon) rotating inside the F1 region and a stationary peripheral stalk (subunits F6, b, d, and OSCP).

The protein resides in the mitochondrion. It localises to the mitochondrion inner membrane. Functionally, subunit epsilon, of the mitochondrial membrane ATP synthase complex (F(1)F(0) ATP synthase or Complex V) that produces ATP from ADP in the presence of a proton gradient across the membrane which is generated by electron transport complexes of the respiratory chain. ATP synthase complex consist of a soluble F(1) head domain - the catalytic core - and a membrane F(1) domain - the membrane proton channel. These two domains are linked by a central stalk rotating inside the F(1) region and a stationary peripheral stalk. During catalysis, ATP synthesis in the catalytic domain of F(1) is coupled via a rotary mechanism of the central stalk subunits to proton translocation. In vivo, can only synthesize ATP although its ATP hydrolase activity can be activated artificially in vitro. May be essential for the assembly of F(1) and may play an important role in the incorporation of the hydrophobic subunit c into the F(1)-c oligomer rotor of the mitochondrial ATP synthase complex. The polypeptide is ATP synthase F(1) complex subunit epsilon, mitochondrial (Dictyostelium discoideum (Social amoeba)).